We begin with the raw amino-acid sequence, 200 residues long: Formate dehydrogenase iron-sulfur subunit (200 aa).

4Fe-4S ferredoxin-type domains lie at 7–37 (VKFY…VGVN), 50–81 (GKEK…VRAD), and 82–111 (GIVL…FPKS). Cysteine 16, cysteine 19, cysteine 22, cysteine 26, cysteine 59, cysteine 62, cysteine 67, cysteine 71, cysteine 91, cysteine 94, cysteine 97, cysteine 101, cysteine 123, cysteine 126, cysteine 155, and cysteine 159 together coordinate [4Fe-4S] cluster.

Formate dehydrogenase is a membrane-bound complex, formed of at least three different subunits. [4Fe-4S] cluster serves as cofactor.

Functionally, this chain is an electron transfer unit containing 18 cysteine residues, 16 of which occur in four clusters. This chain is Formate dehydrogenase iron-sulfur subunit (fdhB1), found in Wolinella succinogenes (strain ATCC 29543 / DSM 1740 / CCUG 13145 / JCM 31913 / LMG 7466 / NCTC 11488 / FDC 602W) (Vibrio succinogenes).